We begin with the raw amino-acid sequence, 293 residues long: MPWIQLKLNTTGANAEELSDALMEAGAVSITFQDTHDTPVFEPLPGETRLWGDTDVIGLFDAETDMKDVVAILEQHPLLGAGFTHKIEQLEDKDWEREWMDNFHPMRFGERLWICPSWRDIPDENAVNVMLDPGLAFGTGTHPTTSLCLQWLDGLDLNGKTVIDFGCGSGILAIAALKLGAAKAIGIDIDPQAIQASRDNAERNGVSDRLELYLPKDQPEAMKADVVVANILAGPLRELAPLISVLPVEGGLLGLSGILASQAESVCDAYAELFTLDPVVEKEEWCRITGRKK.

Residues Thr-145, Gly-166, Asp-188, and Asn-230 each coordinate S-adenosyl-L-methionine.

The protein belongs to the methyltransferase superfamily. PrmA family.

The protein localises to the cytoplasm. The catalysed reaction is L-lysyl-[protein] + 3 S-adenosyl-L-methionine = N(6),N(6),N(6)-trimethyl-L-lysyl-[protein] + 3 S-adenosyl-L-homocysteine + 3 H(+). Functionally, methylates ribosomal protein L11. The chain is Ribosomal protein L11 methyltransferase from Salmonella heidelberg (strain SL476).